We begin with the raw amino-acid sequence, 507 residues long: Probable Xaa-Pro aminopeptidase TRV_02643 (507 aa).

Mn(2+)-binding residues include D275, D286, E434, and E478.

The protein belongs to the peptidase M24B family. Requires Mn(2+) as cofactor.

It catalyses the reaction Release of any N-terminal amino acid, including proline, that is linked to proline, even from a dipeptide or tripeptide.. In terms of biological role, catalyzes the removal of a penultimate prolyl residue from the N-termini of peptides. The sequence is that of Probable Xaa-Pro aminopeptidase TRV_02643 from Trichophyton verrucosum (strain HKI 0517).